The following is a 163-amino-acid chain: UPF0478 protein SERP1299 (163 aa).

Residues 7 to 27 (IAGIIAAIAFLILCIGIVVVL) traverse the membrane as a helical segment.

This sequence belongs to the UPF0478 family.

It is found in the cell membrane. This is UPF0478 protein SERP1299 from Staphylococcus epidermidis (strain ATCC 35984 / DSM 28319 / BCRC 17069 / CCUG 31568 / BM 3577 / RP62A).